The following is a 263-amino-acid chain: MKEMYENAEDKVNNSTGKWSCVEERICHLQHENPCIEQQLDDVHQKEDHKEIVTNIQRGFIESGKKDLMLEEKNKKLMNECDHLKESLFQYEREKAERVVVVRQLQQEAADSLKKLTMLESPLEGISHYHINLDETQVPKKKLFQVESQFDDLMVEKEAVSSKCVNLAKENQVFQQKLLSMKKVQQECEKLEEDKKMLEEEILNLKTHMENSMVELSKLQEYKSELDERAMQAVEKLEEIHLQEQAQYKKQLEQLNKDIIQLH.

Coiled coils occupy residues 65–121 (KKDL…MLES) and 171–263 (NQVF…IQLH).

This chain is Putative ankyrin repeat domain-containing protein 20A12 pseudogene, found in Homo sapiens (Human).